The primary structure comprises 572 residues: Proline--tRNA ligase (572 aa).

This sequence belongs to the class-II aminoacyl-tRNA synthetase family. ProS type 1 subfamily. Homodimer.

It localises to the cytoplasm. It catalyses the reaction tRNA(Pro) + L-proline + ATP = L-prolyl-tRNA(Pro) + AMP + diphosphate. Its function is as follows. Catalyzes the attachment of proline to tRNA(Pro) in a two-step reaction: proline is first activated by ATP to form Pro-AMP and then transferred to the acceptor end of tRNA(Pro). As ProRS can inadvertently accommodate and process non-cognate amino acids such as alanine and cysteine, to avoid such errors it has two additional distinct editing activities against alanine. One activity is designated as 'pretransfer' editing and involves the tRNA(Pro)-independent hydrolysis of activated Ala-AMP. The other activity is designated 'posttransfer' editing and involves deacylation of mischarged Ala-tRNA(Pro). The misacylated Cys-tRNA(Pro) is not edited by ProRS. This chain is Proline--tRNA ligase, found in Escherichia coli O9:H4 (strain HS).